We begin with the raw amino-acid sequence, 755 residues long: Xaa-Pro dipeptidyl-peptidase (755 aa).

Residues S348, D468, and H498 each act as charge relay system in the active site.

The protein belongs to the peptidase S15 family. Homodimer.

The protein resides in the cytoplasm. It catalyses the reaction Hydrolyzes Xaa-Pro-|- bonds to release unblocked, N-terminal dipeptides from substrates including Ala-Pro-|-p-nitroanilide and (sequentially) Tyr-Pro-|-Phe-Pro-|-Gly-Pro-|-Ile.. Removes N-terminal dipeptides sequentially from polypeptides having unsubstituted N-termini provided that the penultimate residue is proline. This chain is Xaa-Pro dipeptidyl-peptidase, found in Streptococcus thermophilus (strain ATCC BAA-491 / LMD-9).